The sequence spans 681 residues: MSNLKMKEAALIYLDRSGGLQKFIDDCKYYNDSKQSYAVYRFKILINPSDVVELDAELGNHILHQPLKAAEVFQSVCFIAVKTLSLIGQLQTETQINIVLKLTHLPPLPSYGLDLCEFPLDYTSQRFYMMQGIVIAMTTITKYTQGARFLCSDEACPLSKGFQYIRVHVPGATESATIRNDFLCNLCASSLQEDRKFRVLGDKQIVEIIATKALRAFQGYSNNQPFRFQSLTIFLRDESVNKMNIGNEYKIIGIPTCVKTSQTAVCIEANSITFCNSKVPSGISDNFRCLLSLTSSSCWKFTAILANIFASQITPPGTYNLLKLCLLMSLVQTTDRNKELEDCLDILIITSDTLLIDRLLNFSINLVPRGIRHLVSTEIFPTLSRNKYGTGAVSIQAGSALLAKGGICFIGDLASHKKDKLEQLQTVLESRSITVYIPGKKFGEDIDQQMTFPVQCSFWSFVDVDSSSRRNAQKINTLIGQMDCSLIPANLVEAFGLLINCNESSPCHPFLPTVQHTLNKAINPEGLFYAASRQFTTEDFEKLLAFAKNLNVEFSLEAERMTHGYYLASRRIRTGSVCGSKLSASALKYLVFLSEAHARLNLRNKVLKEDVLIAALLFETSLTLKYGATVFCVAPNAVFPFELYNEEYLEQRDLYLTQCQQQLEQFIATYGPGTTIFSSDE.

S292 bears the Phosphoserine mark. Residues 533–621 (RQFTTEDFEK…LIAALLFETS (89 aa)) enclose the MCM domain.

Functionally, plays an important role in meiotic recombination and associated DNA double-strand break repair. This is Minichromosome maintenance domain-containing protein 2 (MCMDC2) from Homo sapiens (Human).